The following is a 346-amino-acid chain: Cell shape-determining protein MreC (346 aa).

The stretch at 89-118 (NRRLKAELAEMRQWRDRALALQDQNDRFKS) forms a coiled coil. Residues 292–346 (SLPPVTTEDPQTSILSNPVSRPVAPTPSPATATPSAAPAARPATTATPPQTGAPR) are disordered. Positions 299–308 (EDPQTSILSN) are enriched in polar residues. Residues 309–340 (PVSRPVAPTPSPATATPSAAPAARPATTATPP) are compositionally biased toward low complexity.

This sequence belongs to the MreC family. Interacts with penicillin-binding proteins (PBP2, PBP1a, PBP1b, PBP2a and PBP2b). Interacts with outer membrane proteins belonging to the TonB-dependent receptor family of transport proteins.

It localises to the periplasm. Functionally, involved in formation and maintenance of cell shape. Required for the spatial organization of components of the peptidoglycan-synthesizing holoenzyme in the periplasm and peptidoglycan synthetic activity. The polypeptide is Cell shape-determining protein MreC (Caulobacter vibrioides (strain NA1000 / CB15N) (Caulobacter crescentus)).